Here is a 614-residue protein sequence, read N- to C-terminus: Acetylcholinesterase (614 aa).

A signal peptide spans methionine 1–alanine 31. Cysteine 100 and cysteine 127 are joined by a disulfide. Position 117 (tryptophan 117) interacts with galanthamine. Tryptophan 117 contributes to the huperzine A binding site. Glycine 153 contacts huprine W. Tyrosine 164 lines the huperzine A pocket. Glutamate 233 to serine 234 serves as a coordination point for galanthamine. Serine 234 provides a ligand contact to huprine W. Serine 234 (acyl-ester intermediate) is an active-site residue. A disulfide bond links cysteine 288 and cysteine 303. Asparagine 296 carries N-linked (GlcNAc...) asparagine glycosylation. Glutamate 365 serves as the catalytic Charge relay system. Tyrosine 368 is a binding site for galanthamine. Residue tyrosine 368 participates in huperzine A binding. Asparagine 381 carries an N-linked (GlcNAc...) asparagine glycan. The cysteines at positions 440 and 560 are disulfide-linked. Huprine W is bound by residues tryptophan 470 and histidine 478. Histidine 478 acts as the Charge relay system in catalysis. An N-linked (GlcNAc...) asparagine glycan is attached at asparagine 495. Phenylalanine 588 carries the GPI-anchor amidated glycine lipid modification.

The protein belongs to the type-B carboxylesterase/lipase family. In terms of assembly, interacts with PRIMA1. The interaction with PRIMA1 is required to anchor it to the basal lamina of cells and organize into tetramers. Isoform H generates GPI-anchored dimers; disulfide linked. Isoform T generates multiple structures, ranging from monomers and dimers to collagen-tailed and hydrophobic-tailed forms, in which catalytic tetramers are associated with anchoring proteins that attach them to the basal lamina or to cell membranes. In the collagen-tailed forms, isoform T subunits are associated with a specific collagen, COLQ, which triggers the formation of isoform T tetramers, from monomers and dimers. Isoform R may be monomeric. Isoform H is highly expressed in erythrocytes.

The protein localises to the synapse. It is found in the secreted. It localises to the cell membrane. The protein resides in the nucleus. It catalyses the reaction acetylcholine + H2O = choline + acetate + H(+). Hydrolyzes rapidly the acetylcholine neurotransmitter released into the synaptic cleft allowing to terminate the signal transduction at the neuromuscular junction. Role in neuronal apoptosis. The chain is Acetylcholinesterase from Homo sapiens (Human).